The following is a 404-amino-acid chain: Serine/threonine transporter SstT (404 aa).

9 helical membrane passes run 12 to 32 (GGNL…LALV), 53 to 73 (AIAP…KEVG), 81 to 101 (ILVM…VLSF), 140 to 160 (ALAN…GIAL), 177 to 197 (AVSF…FGLV), 216 to 236 (LGVL…LIVF), 287 to 307 (VAIP…VTVL), 329 to 349 (IVAS…LLLI), and 356 to 376 (FNIP…IGVI).

Belongs to the dicarboxylate/amino acid:cation symporter (DAACS) (TC 2.A.23) family.

The protein resides in the cell inner membrane. The enzyme catalyses L-serine(in) + Na(+)(in) = L-serine(out) + Na(+)(out). It catalyses the reaction L-threonine(in) + Na(+)(in) = L-threonine(out) + Na(+)(out). Functionally, involved in the import of serine and threonine into the cell, with the concomitant import of sodium (symport system). The sequence is that of Serine/threonine transporter SstT from Actinobacillus pleuropneumoniae serotype 7 (strain AP76).